Reading from the N-terminus, the 1034-residue chain is DNA polymerase I B, chloroplastic/mitochondrial (1034 aa).

A chloroplast and mitochondrion-targeting transit peptide spans 1–55 (MGVSLRHLSPSSFWVSRRPRVSSSILSFLVPRRRILCTRKVAIIKGNAGYSTATD). One can recognise a 3'-5' exonuclease domain in the interval 270–468 (ACDTEVSRID…LYESMKKQLQ (199 aa)). Residues 700–1030 (HAIAALCEVC…SVDAKCAQNW (331 aa)) form a polymerase region.

Belongs to the DNA polymerase type-A family. As to expression, expressed in shoot apical meristem.

The protein localises to the mitochondrion. It localises to the plastid. Its subcellular location is the chloroplast. It catalyses the reaction DNA(n) + a 2'-deoxyribonucleoside 5'-triphosphate = DNA(n+1) + diphosphate. Not inhibited by aphidicolin. Functionally, in addition to polymerase activity, this DNA polymerase exhibits 5'-3' exonuclease activity. Required for DNA replication and accumulation in plastids and mitochondria. The protein is DNA polymerase I B, chloroplastic/mitochondrial (POLIB) of Arabidopsis thaliana (Mouse-ear cress).